The primary structure comprises 473 residues: Cysteine--tRNA ligase (473 aa).

Cys29 is a Zn(2+) binding site. A 'HIGH' region motif is present at residues 31 to 41; it reads ATVQSAPHIGH. Zn(2+) contacts are provided by Cys207, His232, and Glu236. The short motif at 263 to 267 is the 'KMSKS' region element; sequence KMSKS. An ATP-binding site is contributed by Lys266.

Belongs to the class-I aminoacyl-tRNA synthetase family. Monomer. It depends on Zn(2+) as a cofactor.

It localises to the cytoplasm. It catalyses the reaction tRNA(Cys) + L-cysteine + ATP = L-cysteinyl-tRNA(Cys) + AMP + diphosphate. The sequence is that of Cysteine--tRNA ligase from Corynebacterium kroppenstedtii (strain DSM 44385 / JCM 11950 / CIP 105744 / CCUG 35717).